The sequence spans 219 residues: Transmembrane protein 247 (219 aa).

2 stretches are compositionally biased toward basic and acidic residues: residues 1–10 (MAAEDREMME) and 29–45 (SKSE…ESQK). The disordered stretch occupies residues 1–101 (MAAEDREMME…LPPTPGTERN (101 aa)). Positions 121 to 156 (LHEKNQRQRQHEVVMEQLQRERQHEVVMEQLQQEAA) form a coiled coil. 2 helical membrane passes run 167–187 (FLLP…IHII) and 194–214 (VFFL…LCLI).

It is found in the membrane. The chain is Transmembrane protein 247 (TMEM247) from Homo sapiens (Human).